A 150-amino-acid chain; its full sequence is Protein Turandot X (150 aa).

The N-terminal stretch at 1–22 (MGLHIGSLLICVFLGILPFATA) is a signal peptide. Residues 127 to 150 (REEGQSNHANSPTTLPSRIQKMTK) are disordered. The segment covering 132-150 (SNHANSPTTLPSRIQKMTK) has biased composition (polar residues).

This sequence belongs to the Turandot family.

It is found in the secreted. In terms of biological role, a humoral factor that may play a role in stress tolerance. The chain is Protein Turandot X from Drosophila simulans (Fruit fly).